Here is a 129-residue protein sequence, read N- to C-terminus: Basic blue protein (129 aa).

A signal peptide spans 1-33 (MAKGRGSASWSARAIVTLMAVSVLLLQADYVQA). The 96-residue stretch at 34 to 129 (ATYTVGDSGI…SDMKIAVTAV (96 aa)) folds into the Phytocyanin domain. 4 residues coordinate Cu cation: His-72, Cys-112, His-117, and Met-122. Cys-85 and Cys-118 are joined by a disulfide.

In terms of tissue distribution, expressed in the inflorescence and in the transmitting tract of the pistil. Detected in roots, stems, cauline leaves, cotyledons, hypocotyls, guard cells, pistils, sepals, stamen filaments and vascular bundles of roots but not of leaves. Not expressed in petals, anthers or pollen.

The protein resides in the secreted. The protein localises to the extracellular space. It localises to the extracellular matrix. In terms of biological role, forms a concentration gradient along the pollen tube growth path, with a lower level in the stigma papilla cell wall and a higher level in the transmitting tract extracellular matix of the style. This is Basic blue protein (ARPN) from Arabidopsis thaliana (Mouse-ear cress).